The primary structure comprises 200 residues: ATP-dependent Clp protease proteolytic subunit (200 aa).

The Nucleophile role is filled by Ser-99. His-124 is a catalytic residue.

This sequence belongs to the peptidase S14 family. In terms of assembly, fourteen ClpP subunits assemble into 2 heptameric rings which stack back to back to give a disk-like structure with a central cavity, resembling the structure of eukaryotic proteasomes.

It is found in the cytoplasm. The catalysed reaction is Hydrolysis of proteins to small peptides in the presence of ATP and magnesium. alpha-casein is the usual test substrate. In the absence of ATP, only oligopeptides shorter than five residues are hydrolyzed (such as succinyl-Leu-Tyr-|-NHMec, and Leu-Tyr-Leu-|-Tyr-Trp, in which cleavage of the -Tyr-|-Leu- and -Tyr-|-Trp bonds also occurs).. Its function is as follows. Cleaves peptides in various proteins in a process that requires ATP hydrolysis. Has a chymotrypsin-like activity. Plays a major role in the degradation of misfolded proteins. This is ATP-dependent Clp protease proteolytic subunit from Syntrophomonas wolfei subsp. wolfei (strain DSM 2245B / Goettingen).